Reading from the N-terminus, the 167-residue chain is uncharacterized protein (167 aa).

2 DED domains span residues 2-75 and 93-167; these read DLKT…NLFQ and THVL…AKTV.

This is an uncharacterized protein from Saimiriine herpesvirus 2 (strain 11) (SaHV-2).